A 231-amino-acid chain; its full sequence is Acyl-protein thioesterase 2 (231 aa).

Cys-2 is lipidated: S-palmitoyl cysteine. Ser-82 carries the post-translational modification Phosphoserine. Residues Ser-122, Asp-176, and His-210 each act as charge relay system in the active site.

The protein belongs to the AB hydrolase superfamily. AB hydrolase 2 family.

It is found in the cytoplasm. It catalyses the reaction S-hexadecanoyl-L-cysteinyl-[protein] + H2O = L-cysteinyl-[protein] + hexadecanoate + H(+). The enzyme catalyses prostaglandin E2 1-glyceryl ester + H2O = prostaglandin E2 + glycerol + H(+). It carries out the reaction 1-hexadecanoyl-sn-glycero-3-phosphocholine + H2O = sn-glycerol 3-phosphocholine + hexadecanoate + H(+). The catalysed reaction is 1-octadecanoyl-sn-glycero-3-phosphocholine + H2O = octadecanoate + sn-glycerol 3-phosphocholine + H(+). It catalyses the reaction 1-hexadecanoyl-sn-glycero-3-phosphate + H2O = sn-glycerol 3-phosphate + hexadecanoate + H(+). The enzyme catalyses 1-hexadecanoyl-sn-glycero-3-phospho-L-serine + H2O = sn-glycero-3-phospho-L-serine + hexadecanoate + H(+). Its function is as follows. Acts as an acyl-protein thioesterase hydrolyzing fatty acids from S-acylated cysteine residues in proteins such as trimeric G alpha proteins, GSDMD, GAP43, ZDHHC6 or HRAS. Deacylates GAP43. Mediates depalmitoylation of ZDHHC6. Has lysophospholipase activity. Hydrolyzes prostaglandin glycerol esters (PG-Gs) in the following order prostaglandin D2-glycerol ester (PGD2-G) &gt; prostaglandin E2 glycerol ester (PGE2-G) &gt; prostaglandin F2-alpha-glycerol ester (PGF2-alpha-G). Hydrolyzes 1-arachidonoylglycerol but not 2-arachidonoylglycerol or arachidonoylethanolamide. This is Acyl-protein thioesterase 2 (Lypla2) from Rattus norvegicus (Rat).